Here is a 201-residue protein sequence, read N- to C-terminus: Recombination protein RecR (201 aa).

The C4-type zinc finger occupies 60–75 (CSVCGNVDSCDPCTIC). The Toprim domain occupies 83-178 (STLIVVETVG…RTTRLAHGVP (96 aa)).

The protein belongs to the RecR family.

Functionally, may play a role in DNA repair. It seems to be involved in an RecBC-independent recombinational process of DNA repair. It may act with RecF and RecO. The protein is Recombination protein RecR of Methylocella silvestris (strain DSM 15510 / CIP 108128 / LMG 27833 / NCIMB 13906 / BL2).